Here is a 65-residue protein sequence, read N- to C-terminus: LICVKEKFLFSETTETCPDGQNVCFNQAHLIYPGKYKRTRGCAATCPKLQNRDVIFCCSTDKCNL.

Disulfide bonds link Cys3-Cys24, Cys17-Cys42, Cys46-Cys57, and Cys58-Cys63.

It belongs to the three-finger toxin family. Short-chain subfamily. Type C muscarinic toxin sub-subfamily. In terms of assembly, monomer. As to expression, expressed by the venom gland.

It is found in the secreted. Its function is as follows. Binds weakly to the muscarinic acetylcholine receptor (CHRM). This chain is Muscarinic toxin-like protein 1, found in Naja kaouthia (Monocled cobra).